The following is a 353-amino-acid chain: Guanine nucleotide-binding protein subunit alpha (353 aa).

G2 is lipidated: N-myristoyl glycine. Residue C3 is the site of S-palmitoyl cysteine attachment. One can recognise a G-alpha domain in the interval 32–353; sequence NEIKMLLLGA…QENLRLCGLI (322 aa). A G1 motif region spans residues 35 to 48; that stretch reads KMLLLGAGESGKST. The GTP site is built by E43, S44, G45, K46, S47, T48, D150, L175, T181, G203, N269, K270, D272, and A325. S47 is a Mg(2+) binding site. The interval 173 to 181 is G2 motif; it reads DVLRSRVKT. T181 is a Mg(2+) binding site. The segment at 196–205 is G3 motif; sequence YRMFDVGGQR. Positions 265-272 are G4 motif; it reads ILFLNKID. Positions 323-328 are G5 motif; it reads TCATDT.

This sequence belongs to the G-alpha family. G(q) subfamily. As to quaternary structure, g proteins are composed of 3 units; alpha, beta and gamma. The alpha chain contains the guanine nucleotide binding site. The cofactor is Mg(2+).

Its function is as follows. Guanine nucleotide-binding proteins (G proteins) are involved as modulators or transducers in various transmembrane signaling systems. Involved in the mating pathway. The sequence is that of Guanine nucleotide-binding protein subunit alpha (CGA1) from Cochliobolus heterostrophus (strain C4 / ATCC 48331 / race T) (Southern corn leaf blight fungus).